A 316-amino-acid chain; its full sequence is tRNA dimethylallyltransferase (316 aa).

19–26 (GPTASGKT) provides a ligand contact to ATP. 21–26 (TASGKT) serves as a coordination point for substrate. Interaction with substrate tRNA regions lie at residues 44–47 (DSAL), 168–172 (QRITR), and 249–254 (RCVGYR).

It belongs to the IPP transferase family. As to quaternary structure, monomer. The cofactor is Mg(2+).

It carries out the reaction adenosine(37) in tRNA + dimethylallyl diphosphate = N(6)-dimethylallyladenosine(37) in tRNA + diphosphate. Catalyzes the transfer of a dimethylallyl group onto the adenine at position 37 in tRNAs that read codons beginning with uridine, leading to the formation of N6-(dimethylallyl)adenosine (i(6)A). This chain is tRNA dimethylallyltransferase, found in Colwellia psychrerythraea (strain 34H / ATCC BAA-681) (Vibrio psychroerythus).